The following is a 236-amino-acid chain: CD81 antigen (236 aa).

At 1–12 (MGVEGCTKCIKY) the chain is on the cytoplasmic side. Residues 13–33 (LLFVFNFVFWLAGGVILGVAL) traverse the membrane as a helical segment. At 34–63 (WLRHDPQTTSLLYLELGNKPAPNTFYVGIY) the chain is on the extracellular side. Residues 64-84 (ILIAVGAVMMFVGFLGCYGAI) form a helical membrane-spanning segment. Over 85–89 (QESQC) the chain is Cytoplasmic. A helical transmembrane segment spans residues 90-112 (LLGTFFTCLVILFACEVAAGIWG). Over 113–201 (FVNKDQIAKD…QKIDELFSGK (89 aa)) the chain is Extracellular. 2 disulfides stabilise this stretch: cysteine 156–cysteine 190 and cysteine 157–cysteine 175. Residues 202–224 (LYLIGIAAIVVAVIMIFEMILSM) form a helical membrane-spanning segment. Cholesterol is bound at residue glutamate 219. The Cytoplasmic segment spans residues 225–236 (VLCCGIRNSSVY).

The protein belongs to the tetraspanin (TM4SF) family. As to quaternary structure, homodimer. Part of a complex composed of CD19, CR2/CD21, CD81 and IFITM1/CD225 in the membrane of mature B cells. Interacts (via the second extracellular domain) with CD19; this interaction is initiated early during biosynthesis in the ER and enables trafficking of only properly folded CD19. Part of a complex that includes MHC class II/HLA-DR molecules and IFITM1. Interacts with IFITM1. Interacts with IFITM2 and IFITM3. Part of integrin-tetraspanin complex composed of CD9, CD81, beta-1 and beta-2 integrins in the membrane of monocyte/macrophages. Interacts (via the second extracellular domain) with integrin ITGAV:ITGB3. Interacts with CD247/CD3 zeta, ICAM1 and CD9 at the immune synapse on T cell membrane. Part of a GPCR-tetraspanin complex consisting at least of ADGRG1, CD81, possibly CD9, and GNA11 in which CD81 enhances the association of ADGRG1 with GNA11. Part of a complex composed of CD9, CD81, PTGFRN and IGSF8. Interacts directly with IGSF8. Interacts with CD53 and SCIMP. Interacts with SAMHD1 (via its C-terminus). Interacts with glypican GPC3 and with the transcriptional repressor HHEX; binding to GPC3 decreases the availability of free CD81 for binding to HHEX, resulting in nuclear translocation of HHEX and transcriptional repression. Interacts with CLDN1. Interacts with CLDN6 and CLDN9. Not glycosylated. Post-translationally, likely constitutively palmitoylated at low levels. Protein palmitoylation is up-regulated upon coligation of BCR and CD9-C2R-CD81 complexes in lipid rafts. As to expression, expressed in oocytes (at protein level). Highly expressed in granulosa cells. Expressed in skeletal muscle mainly in endothelial cells of endomysial capillaries, in satellite cells and myoblasts (at protein level). Expressed in hepatocytes (at protein level).

It is found in the cell membrane. The protein resides in the basolateral cell membrane. Its function is as follows. Structural component of specialized membrane microdomains known as tetraspanin-enriched microdomains (TERMs), which act as platforms for receptor clustering and signaling. Essential for trafficking and compartmentalization of CD19 receptor on the cell surface of activated B cells. Upon initial encounter with a microbial pathogen, enables the assembly of CD19-CR2 and B cell receptor complexes at signaling TERMs, lowering the threshold dose of antigen required to trigger B cell clonal expansion and humoral immune response. In T cells, associates with CD4 or CD8 coreceptors and defines the maturation state of antigen-induced synapses with B cells. Facilitates localization of CD3 in these immune synapses, required for costimulation and sustained activation of T cells, preferentially triggering T helper type 2 immune response. Can act both as positive and negative regulator of homotypic or heterotypic cell-cell fusion processes. In myoblasts, associates with another tetraspanin CD9 in complex with PTGFRN and inhibits myotube fusion during muscle regeneration. In macrophages, associates with CD9 and beta-1 and beta-2 integrins, and prevents macrophage fusion into multinucleated giant cells specialized in ingesting complement-opsonized large particles. Also prevents the fusion between mononuclear cell progenitors into osteoclasts in charge of bone resorption. Positively regulates sperm-egg fusion and may be involved in the acrosome reaction. Regulates protein trafficking in intracellular compartments. In T cells, associates with dNTPase SAMHD1 and defines its subcellular location, enabling its degradation by the proteasome and thereby controlling intracellular dNTP levels. Also regulates integrin-dependent migration of macrophages, particularly relevant for inflammatory response in the lung. In terms of biological role, (Microbial infection) Specifically required for Plasmodium yoelii infectivity of hepatocytes, controlling sporozoite entry in hepatocytes via the parasitophorous vacuole and subsequent parasite differentiation to exoerythrocytic forms. This chain is CD81 antigen, found in Mus musculus (Mouse).